Here is a 210-residue protein sequence, read N- to C-terminus: Acetoin utilization protein AcuA (210 aa).

Residues 20 to 161 form the N-acetyltransferase domain; the sequence is LIEGPVSPED…YRKIMEKMMN (142 aa).

The protein belongs to the acetyltransferase family. Monomer.

It participates in ketone degradation; acetoin degradation. Its activity is regulated as follows. Activity is sensitive to salt concentration, a high concentration of KCL (500 mM) is needed for complete inactivation. Its function is as follows. Part of the acuABC operon, which is possibly involved in the breakdown of acetoin and butanediol. Acts as an acetyltransferase inactivating acetyl-CoA synthetase AcsA via acetylation at a Lys residue. The chain is Acetoin utilization protein AcuA (acuA) from Bacillus subtilis (strain 168).